The chain runs to 357 residues: DENN domain-containing protein 10 (357 aa).

In terms of domain architecture, uDENN spans methionine 1–asparagine 140. Residues glutamine 165–glutamine 299 form the cDENN domain. The dDENN domain maps to isoleucine 301–isoleucine 357.

The protein belongs to the DENND10 family. As to quaternary structure, interacts with the coiled-coil heterodimer of CCDC22 and CCDC93; the interaction is direct. Interacts with RAB27A and RAB27B (GDP-bound forms preferentially).

The protein resides in the late endosome. Its function is as follows. Guanine nucleotide exchange factor (GEF) regulating homeostasis of late endocytic pathway, including endosomal positioning, maturation and secretion, possibly through activating Rab proteins such as RAB27A and RAB27B. Promotes the exchange of GDP to GTP, converting inactive GDP-bound RAB27A and RAB27B into their active GTP-bound form. This chain is DENN domain-containing protein 10, found in Homo sapiens (Human).